A 292-amino-acid chain; its full sequence is Formamidopyrimidine-DNA glycosylase (292 aa).

Pro2 (schiff-base intermediate with DNA) is an active-site residue. The active-site Proton donor is Glu3. Lys58 functions as the Proton donor; for beta-elimination activity in the catalytic mechanism. Positions 103, 122, and 165 each coordinate DNA. Residues 256–292 (RVYDRALHPCPTPGCKGEISRITQGGRSSFFCSMCQK) form an FPG-type zinc finger. Catalysis depends on Arg282, which acts as the Proton donor; for delta-elimination activity.

Belongs to the FPG family. Monomer. The cofactor is Zn(2+).

It catalyses the reaction Hydrolysis of DNA containing ring-opened 7-methylguanine residues, releasing 2,6-diamino-4-hydroxy-5-(N-methyl)formamidopyrimidine.. It carries out the reaction 2'-deoxyribonucleotide-(2'-deoxyribose 5'-phosphate)-2'-deoxyribonucleotide-DNA = a 3'-end 2'-deoxyribonucleotide-(2,3-dehydro-2,3-deoxyribose 5'-phosphate)-DNA + a 5'-end 5'-phospho-2'-deoxyribonucleoside-DNA + H(+). In terms of biological role, involved in base excision repair of DNA damaged by oxidation or by mutagenic agents. Acts as a DNA glycosylase that recognizes and removes damaged bases. Has a preference for oxidized purines, such as 7,8-dihydro-8-oxoguanine (8-oxoG). Has AP (apurinic/apyrimidinic) lyase activity and introduces nicks in the DNA strand. Cleaves the DNA backbone by beta-delta elimination to generate a single-strand break at the site of the removed base with both 3'- and 5'-phosphates. This Methylocella silvestris (strain DSM 15510 / CIP 108128 / LMG 27833 / NCIMB 13906 / BL2) protein is Formamidopyrimidine-DNA glycosylase.